The chain runs to 418 residues: Acetylornithine aminotransferase (418 aa).

Pyridoxal 5'-phosphate contacts are provided by residues 116 to 117 (GA) and Phe-149. Position 152 (Arg-152) interacts with N(2)-acetyl-L-ornithine. Residue 240–243 (DEVQ) participates in pyridoxal 5'-phosphate binding. An N6-(pyridoxal phosphate)lysine modification is found at Lys-269. Position 296 (Ser-296) interacts with N(2)-acetyl-L-ornithine. Pyridoxal 5'-phosphate is bound at residue Thr-297.

This sequence belongs to the class-III pyridoxal-phosphate-dependent aminotransferase family. ArgD subfamily. Homodimer. The cofactor is pyridoxal 5'-phosphate.

The protein resides in the cytoplasm. The enzyme catalyses N(2)-acetyl-L-ornithine + 2-oxoglutarate = N-acetyl-L-glutamate 5-semialdehyde + L-glutamate. Its pathway is amino-acid biosynthesis; L-arginine biosynthesis; N(2)-acetyl-L-ornithine from L-glutamate: step 4/4. This Prochlorococcus marinus (strain MIT 9313) protein is Acetylornithine aminotransferase.